The primary structure comprises 452 residues: Bifunctional protein GlmU (452 aa).

The tract at residues 1 to 232 (MTARNSLTIV…EDEVRGINTK (232 aa)) is pyrophosphorylase. Residues 11–14 (LAAG), Lys25, Gln78, and 83–84 (GT) contribute to the UDP-N-acetyl-alpha-D-glucosamine site. Asp108 lines the Mg(2+) pocket. UDP-N-acetyl-alpha-D-glucosamine is bound by residues Gly144, Glu158, Asn173, and Asn230. Asn230 contributes to the Mg(2+) binding site. The segment at 233–253 (AQLAEAETVMQTRLRLAAMAA) is linker. The interval 254-452 (GVTLIAPETV…KSRHRKPKAH (199 aa)) is N-acetyltransferase. Residues Arg319 and Lys337 each contribute to the UDP-N-acetyl-alpha-D-glucosamine site. The active-site Proton acceptor is the His349. UDP-N-acetyl-alpha-D-glucosamine-binding residues include Tyr352 and Asn363. Acetyl-CoA contacts are provided by residues Ala366, 372-373 (NY), Ser391, Ser409, and Arg426.

The protein in the N-terminal section; belongs to the N-acetylglucosamine-1-phosphate uridyltransferase family. This sequence in the C-terminal section; belongs to the transferase hexapeptide repeat family. In terms of assembly, homotrimer. The cofactor is Mg(2+).

The protein resides in the cytoplasm. It carries out the reaction alpha-D-glucosamine 1-phosphate + acetyl-CoA = N-acetyl-alpha-D-glucosamine 1-phosphate + CoA + H(+). The enzyme catalyses N-acetyl-alpha-D-glucosamine 1-phosphate + UTP + H(+) = UDP-N-acetyl-alpha-D-glucosamine + diphosphate. It participates in nucleotide-sugar biosynthesis; UDP-N-acetyl-alpha-D-glucosamine biosynthesis; N-acetyl-alpha-D-glucosamine 1-phosphate from alpha-D-glucosamine 6-phosphate (route II): step 2/2. It functions in the pathway nucleotide-sugar biosynthesis; UDP-N-acetyl-alpha-D-glucosamine biosynthesis; UDP-N-acetyl-alpha-D-glucosamine from N-acetyl-alpha-D-glucosamine 1-phosphate: step 1/1. Its pathway is bacterial outer membrane biogenesis; LPS lipid A biosynthesis. Catalyzes the last two sequential reactions in the de novo biosynthetic pathway for UDP-N-acetylglucosamine (UDP-GlcNAc). The C-terminal domain catalyzes the transfer of acetyl group from acetyl coenzyme A to glucosamine-1-phosphate (GlcN-1-P) to produce N-acetylglucosamine-1-phosphate (GlcNAc-1-P), which is converted into UDP-GlcNAc by the transfer of uridine 5-monophosphate (from uridine 5-triphosphate), a reaction catalyzed by the N-terminal domain. The protein is Bifunctional protein GlmU of Rhodopseudomonas palustris (strain TIE-1).